Consider the following 268-residue polypeptide: Ribosomal RNA small subunit methyltransferase A (268 aa).

Residues Asn10, Ile12, Gly37, Glu58, Asp83, and Asn107 each coordinate S-adenosyl-L-methionine.

Belongs to the class I-like SAM-binding methyltransferase superfamily. rRNA adenine N(6)-methyltransferase family. RsmA subfamily.

Its subcellular location is the cytoplasm. It carries out the reaction adenosine(1518)/adenosine(1519) in 16S rRNA + 4 S-adenosyl-L-methionine = N(6)-dimethyladenosine(1518)/N(6)-dimethyladenosine(1519) in 16S rRNA + 4 S-adenosyl-L-homocysteine + 4 H(+). In terms of biological role, specifically dimethylates two adjacent adenosines (A1518 and A1519) in the loop of a conserved hairpin near the 3'-end of 16S rRNA in the 30S particle. May play a critical role in biogenesis of 30S subunits. This Caldanaerobacter subterraneus subsp. tengcongensis (strain DSM 15242 / JCM 11007 / NBRC 100824 / MB4) (Thermoanaerobacter tengcongensis) protein is Ribosomal RNA small subunit methyltransferase A.